The following is a 423-amino-acid chain: Histidine--tRNA ligase 2 (423 aa).

This sequence belongs to the class-II aminoacyl-tRNA synthetase family. As to quaternary structure, homodimer.

Its subcellular location is the cytoplasm. It carries out the reaction tRNA(His) + L-histidine + ATP = L-histidyl-tRNA(His) + AMP + diphosphate + H(+). This Bacillus cereus (strain ATCC 10987 / NRS 248) protein is Histidine--tRNA ligase 2.